The following is a 45-amino-acid chain: Large ribosomal subunit protein bL34 (45 aa).

Belongs to the bacterial ribosomal protein bL34 family.

The polypeptide is Large ribosomal subunit protein bL34 (Acidothermus cellulolyticus (strain ATCC 43068 / DSM 8971 / 11B)).